Here is a 701-residue protein sequence, read N- to C-terminus: CRS2-associated factor 1, chloroplastic (701 aa).

A chloroplast-targeting transit peptide spans 1–37 (MSLKLNTPFPIFAPSLFPNHNPRAPSEIRFSRWGNAN). Disordered stretches follow at residues 68 to 136 (VHTH…PEVK) and 191 to 221 (LPQS…QKPG). CRM domains lie at 241 to 337 (EPLT…TRPR) and 359 to 455 (EGLT…LTTP). Positions 471–532 (LPEDDEPSVS…SLQSWSTKDV (62 aa)) are disordered. 2 stretches are compositionally biased toward polar residues: residues 479 to 492 (VSPN…QNPP) and 520 to 530 (TINSLQSWSTK). A CRS2 binding region spans residues 564 to 586 (RVLILMKQAVESGTALVLDAADL).

Interacts with CRS2 and RNA. Part of large ribonucleo-protein complexes that include group IIB introns, CRS2 and CAF1.

Its subcellular location is the plastid. It is found in the chloroplast stroma. In terms of biological role, required for the splicing of group IIB introns in chloroplasts. Forms splicing particles with CRS2. Interacts with RNA and confers intron specificity of the splicing particles. The sequence is that of CRS2-associated factor 1, chloroplastic from Arabidopsis thaliana (Mouse-ear cress).